The primary structure comprises 194 residues: dTTP/UTP pyrophosphatase (194 aa).

Residue D68 is the Proton acceptor of the active site.

Belongs to the Maf family. YhdE subfamily. The cofactor is a divalent metal cation.

Its subcellular location is the cytoplasm. It catalyses the reaction dTTP + H2O = dTMP + diphosphate + H(+). The enzyme catalyses UTP + H2O = UMP + diphosphate + H(+). Its function is as follows. Nucleoside triphosphate pyrophosphatase that hydrolyzes dTTP and UTP. May have a dual role in cell division arrest and in preventing the incorporation of modified nucleotides into cellular nucleic acids. This Clostridioides difficile (strain 630) (Peptoclostridium difficile) protein is dTTP/UTP pyrophosphatase.